Here is a 92-residue protein sequence, read N- to C-terminus: Large ribosomal subunit protein eL43 (92 aa).

A C4-type zinc finger spans residues 39–60 (CEFCGKYAVKRKAVGIWGCKAC).

It belongs to the eukaryotic ribosomal protein eL43 family.

In Gossypium hirsutum (Upland cotton), this protein is Large ribosomal subunit protein eL43 (RPL37A).